Here is a 127-residue protein sequence, read N- to C-terminus: Spore germination protein 2 (127 aa).

The signal sequence occupies residues 1 to 25 (MNIRNSLILIISTILFFSIINGSLS). 2 N-linked (GlcNAc...) asparagine glycosylation sites follow: Asn54 and Asn118.

Belongs to the Dictyostelium gerABC family.

The protein resides in the secreted. The protein is Spore germination protein 2 (gerB) of Dictyostelium discoideum (Social amoeba).